The primary structure comprises 1588 residues: MVQLAKVPILGNDIIHVGYNIHDHLVETIIKHCPSSTYVICNDTNLSKVPYYQQLVLEFKASLPEGSRLLTYVVKPGETSKSRETKAQLEDYLLVEGCTRDTVMVAIGGGVIGDMIGFVASTFMRGVRVVQVPTSLLAMVDSSIGGKTAIDTPLGKNFIGAFWQPKFVLVDIKWLETLAKREFINGMAEVIKTACIWNADEFTRLESNASLFLNVVNGAKNVKVTNQLTNEIDEISNTDIEAMLDHTYKLVLESIKVKAEVVSSDERESSLRNLLNFGHSIGHAYEAILTPQALHGECVSIGMVKEAELSRYFGILSPTQVARLSKILVAYGLPVSPDEKWFKELTLHKKTPLDILLKKMSIDKKNEGSKKKVVILESIGKCYGDSAQFVSDEDLRFILTDETLVYPFKDIPADQQKVVIPPGSKSISNRALILAALGEGQCKIKNLLHSDDTKHMLTAVHELKGATISWEDNGETVVVEGHGGSTLSACADPLYLGNAGTASRFLTSLAALVNSTPSQKYIVLTGNARMQQRPIAPLVDSLRANGTKIEYLNNEGSLPIKVYTDSVFKGGRIELAATVSSQYVSSILMCAPYAEEPVTLALVGGKPISKLYVDMTIKMMEKFGINVETSTTEPYTYYIPKGHYINPSEYVIESDASSATYPLAFAAMTGTTVTVPNIGFESLQGDARFARDVLKPMGCKITQTATSTTVSGPPVGTLKPLKHVDMEPMTDAFLTACVVAAISHDSDPNSANTTTIEGIANQRVKECNRILAMATELAKFGVKTTELPDGIQVHGLNSIKDLKVPSDSSGPVGVCTYDDHRVAMSFSLLAGMVNSQNERDEVATPVRILERHCTGKTWPGWWDVLHSELGAKLDGAEPLECTSKKNSKKSVVIIGMRAAGKTTISKWCASALGYKLVDLDELFEQQHNNQSVKQFVVENGWEKFREEETRIFKEVIQNYGDDGYVFSTGGGIVESAESRKALKDFASSGGYVLHLHRDIEETIVFLQSDPSRPAYVEEIREVWNRREGWYKECSNFSFFAPHCSAETEFQALRRSFSKYIATITGVREIEIPSGRSAFVCLTFDDLTEQTENLTPICYGCEAVEVRVDHLANYSADFVSKQLSILRKATDSIPIIFTVRTKKQGGNFPDEEFKTLRELYDIALKNGVEFLDLELTLPTDIQYEVINKRGNTKIIGSHHDFQGLYSWDDAEWENRFNQALTLDVDVVKFVGTAVNFEDNLRLEHFRDTHKNKPLIAVNMTSKGSISRVLNNVLTPVTSDLLPNSAAPGQLTVAQINKMYTSMGGIEPKELFVVGKPIGHSRSPILHNTGYEILGLPHKFDKFETESAQLVKEKLLDGNKNFGGAAVTIPLKLDIMQYMDELTDAAKIIGAVNTVIPLGNKKFKGDNTDWLGIRNALINNGVPEYVGHTAGLVIGAGGTSRAALYALHSLGCKKIFIINRTTSKLKPLIESLPSEFNIIGIESTKSIEEIKEHVGVAVSCVPADKPLDDELLSKLERFLVKGAHAAFVPTLLEAAYKPSVTPVMTISQDKYQWHVVPGSQMLVHQGVAQFEKWTGFKAPFKAIFDAVTKE.

The interval 1–392 (MVQLAKVPIL…YGDSAQFVSD (392 aa)) is 3-dehydroquinate synthase. Residues 43–45 (DTN), 78–81 (ETSK), 109–111 (GGV), and Asp-114 contribute to the NAD(+) site. Arg-125 contacts 7-phospho-2-dehydro-3-deoxy-D-arabino-heptonate. 134 to 135 (TS) serves as a coordination point for NAD(+). Asp-141 and Lys-147 together coordinate 7-phospho-2-dehydro-3-deoxy-D-arabino-heptonate. Lys-156 provides a ligand contact to NAD(+). Asn-157 serves as a coordination point for 7-phospho-2-dehydro-3-deoxy-D-arabino-heptonate. NAD(+) contacts are provided by residues 174-177 (WLET) and Asn-185. Glu-189 is a Zn(2+) binding site. 7-phospho-2-dehydro-3-deoxy-D-arabino-heptonate is bound by residues 189–192 (EVIK) and Lys-258. The Proton acceptor; for 3-dehydroquinate synthase activity role is filled by Glu-268. 7-phospho-2-dehydro-3-deoxy-D-arabino-heptonate is bound by residues 272 to 276 (RNLLN) and His-279. His-279 contributes to the Zn(2+) binding site. His-283 (proton acceptor; for 3-dehydroquinate synthase activity) is an active-site residue. His-295 and Lys-364 together coordinate 7-phospho-2-dehydro-3-deoxy-D-arabino-heptonate. His-295 lines the Zn(2+) pocket. Positions 405–871 (VYPFKDIPAD…WDVLHSELGA (467 aa)) are EPSP synthase. Catalysis depends on Cys-853, which acts as the For EPSP synthase activity. The tract at residues 890–1080 (SVVIIGMRAA…IPSGRSAFVC (191 aa)) is shikimate kinase. 895 to 902 (GMRAAGKT) contributes to the ATP binding site. The interval 1081 to 1293 (LTFDDLTEQT…AAPGQLTVAQ (213 aa)) is 3-dehydroquinase. The active-site Proton acceptor; for 3-dehydroquinate dehydratase activity is His-1198. Lys-1227 (schiff-base intermediate with substrate; for 3-dehydroquinate dehydratase activity) is an active-site residue. Residues 1306–1588 (PKELFVVGKP…KAIFDAVTKE (283 aa)) form a shikimate dehydrogenase region.

It in the N-terminal section; belongs to the sugar phosphate cyclases superfamily. Dehydroquinate synthase family. In the 2nd section; belongs to the EPSP synthase family. This sequence in the 3rd section; belongs to the shikimate kinase family. The protein in the 4th section; belongs to the type-I 3-dehydroquinase family. It in the C-terminal section; belongs to the shikimate dehydrogenase family. In terms of assembly, homodimer. Zn(2+) is required as a cofactor.

The protein resides in the cytoplasm. The enzyme catalyses 7-phospho-2-dehydro-3-deoxy-D-arabino-heptonate = 3-dehydroquinate + phosphate. It catalyses the reaction 3-dehydroquinate = 3-dehydroshikimate + H2O. It carries out the reaction shikimate + NADP(+) = 3-dehydroshikimate + NADPH + H(+). The catalysed reaction is shikimate + ATP = 3-phosphoshikimate + ADP + H(+). The enzyme catalyses 3-phosphoshikimate + phosphoenolpyruvate = 5-O-(1-carboxyvinyl)-3-phosphoshikimate + phosphate. It participates in metabolic intermediate biosynthesis; chorismate biosynthesis; chorismate from D-erythrose 4-phosphate and phosphoenolpyruvate: step 2/7. The protein operates within metabolic intermediate biosynthesis; chorismate biosynthesis; chorismate from D-erythrose 4-phosphate and phosphoenolpyruvate: step 3/7. Its pathway is metabolic intermediate biosynthesis; chorismate biosynthesis; chorismate from D-erythrose 4-phosphate and phosphoenolpyruvate: step 4/7. It functions in the pathway metabolic intermediate biosynthesis; chorismate biosynthesis; chorismate from D-erythrose 4-phosphate and phosphoenolpyruvate: step 5/7. It participates in metabolic intermediate biosynthesis; chorismate biosynthesis; chorismate from D-erythrose 4-phosphate and phosphoenolpyruvate: step 6/7. In terms of biological role, the AROM polypeptide catalyzes 5 consecutive enzymatic reactions in prechorismate polyaromatic amino acid biosynthesis. The chain is Pentafunctional AROM polypeptide from Saccharomyces cerevisiae (strain YJM789) (Baker's yeast).